The following is a 227-amino-acid chain: Cytochrome c oxidase subunit 2 (227 aa).

At 1–14 (MAYPMQLGFQDATS) the chain is on the mitochondrial intermembrane side. The helical transmembrane segment at 15–45 (PIMEELLHFHDHTLMIVFLISSLVLYIISLM) threads the bilayer. The Mitochondrial matrix segment spans residues 46–59 (LTTKLTHTSTMDAQ). A helical transmembrane segment spans residues 60 to 87 (EVETIWTILPAIILILIALPSLRILYMM). Residues 88–227 (DEINNPSLTV…YFEKWSASML (140 aa)) lie on the Mitochondrial intermembrane side of the membrane. Cu cation is bound by residues His-161, Cys-196, Glu-198, Cys-200, His-204, and Met-207. Residue Glu-198 coordinates Mg(2+). Phosphotyrosine is present on Tyr-218.

Belongs to the cytochrome c oxidase subunit 2 family. In terms of assembly, component of the cytochrome c oxidase (complex IV, CIV), a multisubunit enzyme composed of 14 subunits. The complex is composed of a catalytic core of 3 subunits MT-CO1, MT-CO2 and MT-CO3, encoded in the mitochondrial DNA, and 11 supernumerary subunits COX4I, COX5A, COX5B, COX6A, COX6B, COX6C, COX7A, COX7B, COX7C, COX8 and NDUFA4, which are encoded in the nuclear genome. The complex exists as a monomer or a dimer and forms supercomplexes (SCs) in the inner mitochondrial membrane with NADH-ubiquinone oxidoreductase (complex I, CI) and ubiquinol-cytochrome c oxidoreductase (cytochrome b-c1 complex, complex III, CIII), resulting in different assemblies (supercomplex SCI(1)III(2)IV(1) and megacomplex MCI(2)III(2)IV(2)). Found in a complex with TMEM177, COA6, COX18, COX20, SCO1 and SCO2. Interacts with TMEM177 in a COX20-dependent manner. Interacts with COX20. Interacts with COX16. It depends on Cu cation as a cofactor.

It is found in the mitochondrion inner membrane. The enzyme catalyses 4 Fe(II)-[cytochrome c] + O2 + 8 H(+)(in) = 4 Fe(III)-[cytochrome c] + 2 H2O + 4 H(+)(out). In terms of biological role, component of the cytochrome c oxidase, the last enzyme in the mitochondrial electron transport chain which drives oxidative phosphorylation. The respiratory chain contains 3 multisubunit complexes succinate dehydrogenase (complex II, CII), ubiquinol-cytochrome c oxidoreductase (cytochrome b-c1 complex, complex III, CIII) and cytochrome c oxidase (complex IV, CIV), that cooperate to transfer electrons derived from NADH and succinate to molecular oxygen, creating an electrochemical gradient over the inner membrane that drives transmembrane transport and the ATP synthase. Cytochrome c oxidase is the component of the respiratory chain that catalyzes the reduction of oxygen to water. Electrons originating from reduced cytochrome c in the intermembrane space (IMS) are transferred via the dinuclear copper A center (CU(A)) of subunit 2 and heme A of subunit 1 to the active site in subunit 1, a binuclear center (BNC) formed by heme A3 and copper B (CU(B)). The BNC reduces molecular oxygen to 2 water molecules using 4 electrons from cytochrome c in the IMS and 4 protons from the mitochondrial matrix. The sequence is that of Cytochrome c oxidase subunit 2 (MT-CO2) from Bison bonasus (European bison).